Here is a 652-residue protein sequence, read N- to C-terminus: Phosphatidylinositol-binding clathrin assembly protein (652 aa).

N-acetylserine is present on S2. The ENTH domain maps to 14–145; it reads QHSVTGSAVS…VSYRQVAFDF (132 aa). Residues S16 and S20 each carry the phosphoserine modification. Positions 221 to 294 are interaction with PIMREG; the sequence is KYFDMKKNQC…LEGKKIKDST (74 aa). K238 is covalently cross-linked (Glycyl lysine isopeptide (Lys-Gly) (interchain with G-Cter in SUMO2)). Residues S303 and S315 each carry the phosphoserine modification. The interval 559-580 is disordered; sequence KNDVNWSQPGEKKLTGGSNWQP.

The protein belongs to the PICALM/SNAP91 family. As to quaternary structure, binds to clathrin; involves primarily the C-terminal sequences, but the full-length protein is required for full binding capacity. Binds phosphatidylinositol 4,5- bisphosphate. Interacts with PIMREG; this interaction may change the subcellular location into the nucleus. Interacts with AP2A1 (via its alpha-appendage domain). Interacts (via N-terminus) with VAMP2; VAMP3; VAMP7 and VAMP8 (Via N-terminus). Interacts with LC3/MAP1LC3A. As to expression, expressed in all tissues examined.

It localises to the cell membrane. The protein localises to the membrane. Its subcellular location is the clathrin-coated pit. The protein resides in the golgi apparatus. It is found in the cytoplasmic vesicle. It localises to the clathrin-coated vesicle. The protein localises to the nucleus. Its function is as follows. Cytoplasmic adapter protein that plays a critical role in clathrin-mediated endocytosis which is important in processes such as internalization of cell receptors, synaptic transmission or removal of apoptotic cells. Recruits AP-2 and attaches clathrin triskelions to the cytoplasmic side of plasma membrane leading to clathrin-coated vesicles (CCVs) assembly. Furthermore, regulates clathrin-coated vesicle size and maturation by directly sensing and driving membrane curvature. In addition to binding to clathrin, mediates the endocytosis of small R-SNARES (Soluble NSF Attachment Protein REceptors) between plasma membranes and endosomes including VAMP2, VAMP3, VAMP4, VAMP7 or VAMP8. In turn, PICALM-dependent SNARE endocytosis is required for the formation and maturation of autophagic precursors. Modulates thereby autophagy and the turnover of autophagy substrates such as MAPT/TAU or amyloid precursor protein cleaved C-terminal fragment (APP-CTF). This chain is Phosphatidylinositol-binding clathrin assembly protein (PICALM), found in Homo sapiens (Human).